The sequence spans 455 residues: MSGLRNTSEAVAVLASLGLGMVLLMFVATTPPAVEATQSGIYIDNGKDQTIMHRVLSEDDKLDVSYEILEFLGIAERPTHLSSHQLSLRKSAPKFLLDVYHRITAEEGLSDQDEDDDYERGHRSRRSADLEEDEGEQQKNFITDLDKRAIDESDIIMTFLNKRHHNVDELRHEHGRRLWFDVSNVPNDNYLVMAELRIYQNANEGKWLTANREFTITVYAIGTGTLGQHTMEPLSSVNTTGDYVGWLELNVTEGLHEWLVKSKDNHGIYIGAHAVNRPDREVKLDDIGLIHRKVDDEFQPFMIGFFRGPELIKATAHSSHHRSKRSASHPRKRKKSVSPNNVPLLEPMESTRSCQMQTLYIDFKDLGWHDWIIAPEGYGAFYCSGECNFPLNAHMNATNHAIVQTLVHLLEPKKVPKPCCAPTRLGALPVLYHLNDENVNLKKYRNMIVKSCGCH.

A signal peptide spans 1-36; it reads MSGLRNTSEAVAVLASLGLGMVLLMFVATTPPAVEA. Positions 37-335 are excised as a propeptide; the sequence is TQSGIYIDNG…SASHPRKRKK (299 aa). The span at 108-118 shows a compositional bias: acidic residues; it reads GLSDQDEDDDY. Residues 108–138 form a disordered region; sequence GLSDQDEDDDYERGHRSRRSADLEEDEGEQQ. N238 and N250 each carry an N-linked (GlcNAc...) asparagine glycan. Positions 316–345 are disordered; the sequence is AHSSHHRSKRSASHPRKRKKSVSPNNVPLL. Basic residues predominate over residues 318 to 336; sequence SSHHRSKRSASHPRKRKKS. Intrachain disulfides connect C354/C420, C383/C452, and C387/C454. N-linked (GlcNAc...) asparagine glycosylation is present at N396.

It belongs to the TGF-beta family. As to quaternary structure, homodimer; disulfide-linked. Interacts with nord and dpp. In terms of tissue distribution, expressed in cells of the developing foregut and hindgut during germ band retraction and later embryonic stages. Expressed in the wing disk, mainly in the posterior compartment in the pteropleural and medial regions extending into the progenitors of the scutellum. High levels are found within the posterior and anterior compartments of the wing pouch and low levels in the hinge region. In the eye/antennal disk, expression is highest anterior to the morphogenetic furrow and in the medial regions with lower levels of expression posterior to the morphogenetic furrow. Expressed throughout the posterior compartment of the leg imaginal disks and within the ventral anterior compartment.

The protein resides in the secreted. In terms of biological role, required for the growth of imaginal tissues and for patterning of the adult wing. The protein is Protein 60A (gbb) of Drosophila melanogaster (Fruit fly).